The primary structure comprises 994 residues: MAADGFVYRWLLFGTTIVLLAEAAQRHTASDNPSTYNIGGVLSNSDSEEHFSTTIKHLNFDQQYVPRKVTYYDKTIRMDKNPIKTVFNVCDKLIENRVYAVVVSHEQTSGDLSPAAVSYTSGFYSIPVIGISSRDAAFSDKNIHVSFLRTVPPYYHQADVWLEMLSHFSYTKVIIIHSSDTDGRAILGRFQTTSQTYYDDVDVRATVELIVEFEPKLESFTEHLIDMKTAQSRVYLMYASTEDAQVIFRDAGEYNMTGEGHVWIVTEQALFANNTPDGVLGLQLEHAHSDKGHIRDSVYVLASAIKEMISNETIGEAPKDCGDSAVNWESGKRLFQYLKSRNITGETGQVAFDDNGDRIYAGYDVINIREQQKKHVVGKFSYDNERAKMRMRINDSEIIWPGKQRRKPEGIMIPTHLKVLTIEEKPFVYVRRMGDDEFRCEPDERPCPLFNASDATANEFCCRGYCIDLLIELSKRINFTYDLALSPDGQFGHYILRNSTGAMTLRKEWTGLIGELVNERADMIVAPLTINPERAEYIEFSKPFKYQGITILEKKPSRSSTLVSFLQPFSNTLWILVMVSVHVVALVLYLLDRFSPFGRFKLSHSDSNEEKALNLSSAVWFAWGVLLNSGIGEGTPRSFSARVLGMVWAGFAMIIVASYTANLAAFLVLERPKTKLSGINDARLRNTMENLTCATVKGSSVDMYFRRQVELSNMYRTMEANNYATAEQAIQDVKKGKLMAFIWDSSRLEYEASKDCELVTAGELFGRSGYGIGLQKGSPWTDAVTLAILEFHESGFMEKLDKQWIFHGHVQQNCELFEKTPNTLGLKNMAGVFILVGVGIAGGVGLIIIEVIYKKHQVKKQKRLDIARHAADKWRGTIEKRKTIRASLAMQRQYNVGLNATHAPGTISLAVDKRRYPRLGQRLGPERAWPGDAADVLRIRRPYELGKPGQSPKVMGANQPTMPMPMLGKTRPQQNMLPPRYSPGYTSDVSHLVV.

The N-terminal stretch at 1–23 (MAADGFVYRWLLFGTTIVLLAEA) is a signal peptide. The Extracellular portion of the chain corresponds to 24-570 (AQRHTASDNP…TLVSFLQPFS (547 aa)). N-linked (GlcNAc...) asparagine glycosylation is found at Asn-255, Asn-311, Asn-342, Asn-394, Asn-451, Asn-478, and Asn-498. Residues 527-529 (PLT) and Arg-534 each bind glycine. Residues 571 to 591 (NTLWILVMVSVHVVALVLYLL) traverse the membrane as a helical segment. The Cytoplasmic portion of the chain corresponds to 592 to 648 (DRFSPFGRFKLSHSDSNEEKALNLSSAVWFAWGVLLNSGIGEGTPRSFSARVLGMVW). A helical transmembrane segment spans residues 649–669 (AGFAMIIVASYTANLAAFLVL). The Extracellular portion of the chain corresponds to 670 to 828 (ERPKTKLSGI…KTPNTLGLKN (159 aa)). Residue Asn-690 is glycosylated (N-linked (GlcNAc...) asparagine). Glycine contacts are provided by Ser-700 and Asp-744. The helical transmembrane segment at 829–849 (MAGVFILVGVGIAGGVGLIII) threads the bilayer. Residues 850–994 (EVIYKKHQVK…YTSDVSHLVV (145 aa)) are Cytoplasmic-facing. The interval 971-994 (RPQQNMLPPRYSPGYTSDVSHLVV) is disordered. Residues 984–994 (GYTSDVSHLVV) are compositionally biased toward polar residues.

This sequence belongs to the glutamate-gated ion channel (TC 1.A.10.1) family. In terms of assembly, forms a heteromeric NMDA channel with Nmdar2.

The protein resides in the cell membrane. It is found in the postsynaptic cell membrane. It localises to the postsynaptic density. Functionally, NMDA receptor subtype of glutamate-gated ion channels with high calcium permeability and voltage-dependent sensitivity to magnesium. Mediated by glycine. This protein plays a key role in synaptic plasticity, synaptogenesis, excitotoxicity, memory acquisition and learning. It mediates neuronal functions in glutamate neurotransmission. Is involved in the cell surface targeting of NMDA receptors. Plays a role in associative learning and in long-term memory consolidation. In Drosophila ananassae (Fruit fly), this protein is Glutamate [NMDA] receptor subunit 1.